A 548-amino-acid chain; its full sequence is ATP synthase subunit alpha (548 aa).

172–179 contacts ATP; the sequence is GDRKTGKT.

It belongs to the ATPase alpha/beta chains family. As to quaternary structure, F-type ATPases have 2 components, CF(1) - the catalytic core - and CF(0) - the membrane proton channel. CF(1) has five subunits: alpha(3), beta(3), gamma(1), delta(1), epsilon(1). CF(0) has three main subunits: a(1), b(2) and c(9-12). The alpha and beta chains form an alternating ring which encloses part of the gamma chain. CF(1) is attached to CF(0) by a central stalk formed by the gamma and epsilon chains, while a peripheral stalk is formed by the delta and b chains.

The protein localises to the cell membrane. The enzyme catalyses ATP + H2O + 4 H(+)(in) = ADP + phosphate + 5 H(+)(out). In terms of biological role, produces ATP from ADP in the presence of a proton gradient across the membrane. The alpha chain is a regulatory subunit. This is ATP synthase subunit alpha from Mycobacteroides abscessus (strain ATCC 19977 / DSM 44196 / CCUG 20993 / CIP 104536 / JCM 13569 / NCTC 13031 / TMC 1543 / L948) (Mycobacterium abscessus).